Consider the following 396-residue polypeptide: Cell adhesion molecule 3 (396 aa).

The first 22 residues, 1 to 22 (MGAPSALPLLLLLACSWAPGGA), serve as a signal peptide directing secretion. One can recognise an Ig-like V-type domain in the interval 23–124 (NLSQDDSQPW…VRTAKSLVTV (102 aa)). Topologically, residues 23–328 (NLSQDDSQPW…PVPSSSSTYH (306 aa)) are extracellular. 3 disulfide bridges follow: Cys-48-Cys-108, Cys-150-Cys-207, and Cys-252-Cys-297. Ig-like C2-type domains lie at 128-226 (PQKP…QRIE) and 231-313 (PTAM…FTLN). Asn-288 carries an N-linked (GlcNAc...) asparagine glycan. The chain crosses the membrane as a helical span at residues 329 to 349 (AIIGGIVAFIVFLLLILLIFL). Over 350–396 (GHYLIRHKGTYLTHEAKGSDDAPDADTAIINAEGGQSGGDDKKEYFI) the chain is Cytoplasmic. Positions 365–396 (AKGSDDAPDADTAIINAEGGQSGGDDKKEYFI) are disordered. Residue Ser-386 is modified to Phosphoserine.

Belongs to the nectin family. As to quaternary structure, homodimer. Can form trans-heterodimers with NECTIN3. Interacts with EPB41L1, DLG3, PALS2 and CASK. In terms of tissue distribution, mainly expressed in brain, in neuronal cell bodies of cerebellum, cortex, hippocampus, hypothalamus and spinal cord. In spinal cord predominantly expressed in motor neurons. Expressed in axons, presynaptic nerve terminals, glia cell processes.

The protein localises to the cell membrane. It is found in the cell junction. In terms of biological role, involved in cell-cell adhesion. Has both calcium-independent homophilic cell-cell adhesion activity and calcium-independent heterophilic cell-cell adhesion activity with IGSF4, NECTIN1 and NECTIN3. Interaction with EPB41L1 may regulate structure or function of cell-cell junctions. In Mus musculus (Mouse), this protein is Cell adhesion molecule 3 (Cadm3).